Here is a 179-residue protein sequence, read N- to C-terminus: Large ribosomal subunit protein uL10 (179 aa).

This sequence belongs to the universal ribosomal protein uL10 family. Part of the ribosomal stalk of the 50S ribosomal subunit. The N-terminus interacts with L11 and the large rRNA to form the base of the stalk. The C-terminus forms an elongated spine to which L12 dimers bind in a sequential fashion forming a multimeric L10(L12)X complex.

Forms part of the ribosomal stalk, playing a central role in the interaction of the ribosome with GTP-bound translation factors. This chain is Large ribosomal subunit protein uL10, found in Thermotoga neapolitana (strain ATCC 49049 / DSM 4359 / NBRC 107923 / NS-E).